The primary structure comprises 148 residues: Probable glycine cleavage system H protein 2 (148 aa).

A Lipoyl-binding domain is found at 32-114 (VIVVGITDIA…YGKGWLVKMK (83 aa)). Lys73 carries the post-translational modification N6-lipoyllysine.

This sequence belongs to the GcvH family. As to quaternary structure, the glycine cleavage system is composed of four proteins: P, T, L and H. Requires (R)-lipoate as cofactor.

The glycine cleavage system catalyzes the degradation of glycine. The H protein shuttles the methylamine group of glycine from the P protein to the T protein. The polypeptide is Probable glycine cleavage system H protein 2 (Sulfurisphaera tokodaii (strain DSM 16993 / JCM 10545 / NBRC 100140 / 7) (Sulfolobus tokodaii)).